The primary structure comprises 207 residues: Large ribosomal subunit protein uL4 (207 aa).

The interval 49–78 is disordered; sequence HAVKNRSAVSGGGRKPWRQKGTGRARQGSI.

This sequence belongs to the universal ribosomal protein uL4 family. In terms of assembly, part of the 50S ribosomal subunit.

Functionally, one of the primary rRNA binding proteins, this protein initially binds near the 5'-end of the 23S rRNA. It is important during the early stages of 50S assembly. It makes multiple contacts with different domains of the 23S rRNA in the assembled 50S subunit and ribosome. In terms of biological role, forms part of the polypeptide exit tunnel. In Streptococcus equi subsp. zooepidemicus (strain MGCS10565), this protein is Large ribosomal subunit protein uL4.